The primary structure comprises 952 residues: Ubiquitin carboxyl-terminal hydrolase CYLD (952 aa).

The segment at 106–589 (CEERLSLFRN…LEIMIGKKKG (484 aa)) is interaction with TRIP. CAP-Gly domains are found at residues 153–198 (LAER…VFVA) and 253–286 (DVLP…VQLC). Positions 311-350 (RRPPKLAFMSRGVGDKGSSSHNKPKVTGSTSDPGSRNRSE) are disordered. Over residues 327 to 346 (GSSSHNKPKVTGSTSDPGSR) the composition is skewed to polar residues. S383 is modified (phosphoserine). The segment at 386-409 (EMSSDFGHSSPPPQPPSMNSLSSE) is disordered. The tract at residues 390–465 (DFGHSSPPPQ…LPISSGNAHG (76 aa)) is interaction with TRAF2. Phosphoserine is present on residues S414 and S418. An interaction with IKBKG/NEMO region spans residues 466-680 (LEVGSLAEVK…FTSEEKDPEE (215 aa)). A CAP-Gly 3 domain is found at 488–531 (GQPPGLSDVLAGLELEDECAGCTDGTFRGTRYFTCALKKALFVK). The region spanning 588–946 (KGIQGHYNSC…DAYMCMYQSP (359 aa)) is the USP domain. The Nucleophile role is filled by C597. A B-box region spans residues 777–829 (LEDTPRQCRICGGLAMYECRECYDDPDISAGKIKQFCKTCSTQVHLHPRRLNH). Zn(2+) contacts are provided by C784, C787, C795, C798, C813, C816, H821, and H829. Catalysis depends on H867, which acts as the Proton acceptor.

Belongs to the peptidase C19 family. As to quaternary structure, interacts (via CAP-Gly domain) with IKBKG/NEMO (via proline-rich C-terminal region). Interacts with TRAF2 and TRIP. Interacts with PLK1, DVL1, DVL3, MAVS, TBK1, IKKE and RIGI. Interacts (via CAP-Gly domain) with microtubules. Interacts with HDAC6 and BCL3. Interacts with MAP3K7. Identified in a complex with TRAF6 and SQSTM1. Interacts with OPTN and SQSTM1. Interacts with CEP350. Interacts with RNF31; the interaction is indirect and is mediated via SPATA2. Interacts with SPATA2 (via the PUB domain); the interaction is direct and recruits CYLD to the LUBAC complex, thereby regulating TNF-alpha-induced necroptosis. Phosphorylated on several serine residues by IKKA and/or IKKB in response to immune stimuli. Phosphorylation requires IKBKG. Phosphorylation abolishes TRAF2 deubiquitination, interferes with the activation of Jun kinases, and strongly reduces CD40-dependent gene activation by NF-kappa-B. Post-translationally, ubiquitinated. Polyubiquitinated in hepatocytes treated with palmitic acid. Ubiquitination is mediated by E3 ligase TRIM47 and leads to proteasomal degradation.

It localises to the cytoplasm. Its subcellular location is the perinuclear region. It is found in the cytoskeleton. The protein resides in the cell membrane. The protein localises to the microtubule organizing center. It localises to the centrosome. Its subcellular location is the spindle. It is found in the cilium basal body. The enzyme catalyses Thiol-dependent hydrolysis of ester, thioester, amide, peptide and isopeptide bonds formed by the C-terminal Gly of ubiquitin (a 76-residue protein attached to proteins as an intracellular targeting signal).. Deubiquitinase that specifically cleaves 'Lys-63'- and linear 'Met-1'-linked polyubiquitin chains and is involved in NF-kappa-B activation and TNF-alpha-induced necroptosis. Negatively regulates NF-kappa-B activation by deubiquitinating upstream signaling factors. Contributes to the regulation of cell survival, proliferation and differentiation via its effects on NF-kappa-B activation. Negative regulator of Wnt signaling. Inhibits HDAC6 and thereby promotes acetylation of alpha-tubulin and stabilization of microtubules. Plays a role in the regulation of microtubule dynamics, and thereby contributes to the regulation of cell proliferation, cell polarization, cell migration, and angiogenesis. Required for normal cell cycle progress and normal cytokinesis. Inhibits nuclear translocation of NF-kappa-B. Plays a role in the regulation of inflammation and the innate immune response, via its effects on NF-kappa-B activation. Dispensable for the maturation of intrathymic natural killer cells, but required for the continued survival of immature natural killer cells. Negatively regulates TNFRSF11A signaling and osteoclastogenesis. Involved in the regulation of ciliogenesis, allowing ciliary basal bodies to migrate and dock to the plasma membrane; this process does not depend on NF-kappa-B activation. Ability to remove linear ('Met-1'-linked) polyubiquitin chains regulates innate immunity and TNF-alpha-induced necroptosis: recruited to the LUBAC complex via interaction with SPATA2 and restricts linear polyubiquitin formation on target proteins. Regulates innate immunity by restricting linear polyubiquitin formation on RIPK2 in response to NOD2 stimulation. Involved in TNF-alpha-induced necroptosis by removing linear ('Met-1'-linked) polyubiquitin chains from RIPK1, thereby regulating the kinase activity of RIPK1. Negatively regulates intestinal inflammation by removing 'Lys-63' linked polyubiquitin chain of NLRP6, thereby reducing the interaction between NLRP6 and PYCARD/ASC and formation of the NLRP6 inflammasome. Does not catalyze deubiquitination of heterotypic 'Lys-63'-/'Lys-48'-linked branched ubiquitin chains. Removes 'Lys-63' linked polyubiquitin chain of MAP3K7, which inhibits phosphorylation and blocks downstream activation of the JNK-p38 kinase cascades. Also removes 'Lys-63'-linked polyubiquitin chains of MAP3K1 and MA3P3K3, which inhibit their interaction with MAP2K1 and MAP2K2. The sequence is that of Ubiquitin carboxyl-terminal hydrolase CYLD (Cyld) from Mus musculus (Mouse).